A 337-amino-acid chain; its full sequence is Holliday junction branch migration complex subunit RuvB (337 aa).

Residues 1-181 (MQRLVEIERF…FGMNFRMQFY (181 aa)) are large ATPase domain (RuvB-L). ATP contacts are provided by residues Leu-20, Arg-21, Gly-62, Lys-65, Thr-66, Thr-67, 128-130 (EDF), Arg-171, Tyr-181, and Arg-218. Mg(2+) is bound at residue Thr-66. Positions 182–252 (SPEELSKIIS…RAQYALDELG (71 aa)) are small ATPAse domain (RuvB-S). Residues 255–337 (SYGFDEMDIK…MPALDDGGLF (83 aa)) form a head domain (RuvB-H) region. 2 residues coordinate DNA: Arg-309 and Arg-314.

The protein belongs to the RuvB family. Homohexamer. Forms an RuvA(8)-RuvB(12)-Holliday junction (HJ) complex. HJ DNA is sandwiched between 2 RuvA tetramers; dsDNA enters through RuvA and exits via RuvB. An RuvB hexamer assembles on each DNA strand where it exits the tetramer. Each RuvB hexamer is contacted by two RuvA subunits (via domain III) on 2 adjacent RuvB subunits; this complex drives branch migration. In the full resolvosome a probable DNA-RuvA(4)-RuvB(12)-RuvC(2) complex forms which resolves the HJ.

The protein localises to the cytoplasm. The enzyme catalyses ATP + H2O = ADP + phosphate + H(+). In terms of biological role, the RuvA-RuvB-RuvC complex processes Holliday junction (HJ) DNA during genetic recombination and DNA repair, while the RuvA-RuvB complex plays an important role in the rescue of blocked DNA replication forks via replication fork reversal (RFR). RuvA specifically binds to HJ cruciform DNA, conferring on it an open structure. The RuvB hexamer acts as an ATP-dependent pump, pulling dsDNA into and through the RuvAB complex. RuvB forms 2 homohexamers on either side of HJ DNA bound by 1 or 2 RuvA tetramers; 4 subunits per hexamer contact DNA at a time. Coordinated motions by a converter formed by DNA-disengaged RuvB subunits stimulates ATP hydrolysis and nucleotide exchange. Immobilization of the converter enables RuvB to convert the ATP-contained energy into a lever motion, pulling 2 nucleotides of DNA out of the RuvA tetramer per ATP hydrolyzed, thus driving DNA branch migration. The RuvB motors rotate together with the DNA substrate, which together with the progressing nucleotide cycle form the mechanistic basis for DNA recombination by continuous HJ branch migration. Branch migration allows RuvC to scan DNA until it finds its consensus sequence, where it cleaves and resolves cruciform DNA. The sequence is that of Holliday junction branch migration complex subunit RuvB from Sulfurimonas denitrificans (strain ATCC 33889 / DSM 1251) (Thiomicrospira denitrificans (strain ATCC 33889 / DSM 1251)).